A 264-amino-acid chain; its full sequence is tRNA pseudouridine synthase A (264 aa).

Asp51 functions as the Nucleophile in the catalytic mechanism. Substrate is bound at residue Tyr109.

This sequence belongs to the tRNA pseudouridine synthase TruA family. In terms of assembly, homodimer.

The enzyme catalyses uridine(38/39/40) in tRNA = pseudouridine(38/39/40) in tRNA. Functionally, formation of pseudouridine at positions 38, 39 and 40 in the anticodon stem and loop of transfer RNAs. The chain is tRNA pseudouridine synthase A from Photorhabdus laumondii subsp. laumondii (strain DSM 15139 / CIP 105565 / TT01) (Photorhabdus luminescens subsp. laumondii).